The following is a 451-amino-acid chain: Tol-Pal system protein TolB 1 (451 aa).

The first 19 residues, 1–19 (MTLRMLFAFALLAAAPAQA), serve as a signal peptide directing secretion. Low complexity predominate over residues 18-29 (QAQQTEPQPAEE). Disordered stretches follow at residues 18-37 (QAQQ…GTVS) and 431-451 (NERR…PLLP).

It belongs to the TolB family. The Tol-Pal system is composed of five core proteins: the inner membrane proteins TolA, TolQ and TolR, the periplasmic protein TolB and the outer membrane protein Pal. They form a network linking the inner and outer membranes and the peptidoglycan layer.

Its subcellular location is the periplasm. Its function is as follows. Part of the Tol-Pal system, which plays a role in outer membrane invagination during cell division and is important for maintaining outer membrane integrity. In Novosphingobium aromaticivorans (strain ATCC 700278 / DSM 12444 / CCUG 56034 / CIP 105152 / NBRC 16084 / F199), this protein is Tol-Pal system protein TolB 1.